Reading from the N-terminus, the 3625-residue chain is Spectinabilin polyketide synthase system protein NorA' (3625 aa).

Positions Arg33 to Gln459 constitute a Ketosynthase family 3 (KS3) 1 domain. Active-site for beta-ketoacyl synthase 1 activity residues include Cys206, His341, and His381. The region spanning Leu564–Arg881 is the Malonyl-CoA:ACP transacylase (MAT) 1 domain. Positions His930–Ala1054 are N-terminal hotdog fold 1. One can recognise a PKS/mFAS DH 1 domain in the interval His930–Ala1200. The active-site Proton acceptor; for dehydratase activity 1 is the His962. Residues Ala1066–Ala1200 are C-terminal hotdog fold 1. Asp1125 functions as the Proton donor; for dehydratase activity 1 in the catalytic mechanism. One can recognise a Ketoreductase (KR) 1 domain in the interval Gly1443–Glu1620. Positions Gly1722–Leu1797 constitute a Carrier 1 domain. Ser1757 bears the O-(pantetheine 4'-phosphoryl)serine mark. Positions Asp1815 to Gln2231 constitute a Ketosynthase family 3 (KS3) 2 domain. Active-site for beta-ketoacyl synthase 2 activity residues include Cys1978, His2113, and His2153. Residues Val2336–Ala2656 enclose the Malonyl-CoA:ACP transacylase (MAT) 2 domain. The N-terminal hotdog fold 2 stretch occupies residues His2704–Thr2829. A PKS/mFAS DH 2 domain is found at His2704–Arg2981. His2736 serves as the catalytic Proton acceptor; for dehydratase activity 2. The interval Ala2842–Arg2981 is C-terminal hotdog fold 2. Residue Asp2903 is the Proton donor; for dehydratase activity 2 of the active site. Positions Gly3182–Glu3361 constitute a Ketoreductase (KR) 2 domain. One can recognise a Carrier 2 domain in the interval Arg3462–Leu3537. An O-(pantetheine 4'-phosphoryl)serine modification is found at Ser3497.

In terms of assembly, the spectinabilin polyketide synthase complex is composed of 4 proteins, NorA, NorA', NorB and NorC. The complex comprises 6 modules with a total of 28 catalytic domains catalyzing 7 chain elongations. NorA comprises one module, NorA' two modules, NorB one module and NorC two modules. Requires pantetheine 4'-phosphate as cofactor.

The catalysed reaction is 4-nitrobenzoyl-CoA + 6 (S)-methylmalonyl-CoA + malonyl-CoA + 6 NADPH + 12 H(+) = demethyldeoxyspectinabilin + 7 CO2 + 6 NADP(+) + 8 CoA + 5 H2O. It functions in the pathway antibiotic biosynthesis. The protein operates within polyketide biosynthesis. Component of a type I modular polyketide synthase (PKS) that generates the backbone of the antibiotic spectinabilin (also known as neoaureothin), a nitroaryl-substituted polyketide metabolite. This PKS system accepts the unusual starter unit 4-nitrobenzoyl-CoA and extends it by 6 molecules of (S)-methylmalonyl-CoA and a single molecule of malonyl-CoA. The sequence is that of Spectinabilin polyketide synthase system protein NorA' from Streptomyces orinoci (Streptoverticillium orinoci).